We begin with the raw amino-acid sequence, 722 residues long: Zinc finger protein 600 (722 aa).

Residues 162–184 (FQCNESGKAFNCSSLLRKHQIPH) form a C2H2-type 1; degenerate zinc finger. C2H2-type zinc fingers lie at residues 190–212 (YKCD…CRCH), 218–240 (YKCN…RRLH), 246–268 (HKCN…KAIH), 274–296 (YKCN…RRIH), 302–324 (YKCE…KRIH), 330–352 (YKCK…KRIH), 358–380 (YKCN…HRLH), 386–408 (YKCK…TRIH), and 414–436 (YKCN…KSIH). The segment at 442–464 (YKYEECEKVFSCGSTLETHKIIH) adopts a C2H2-type 11; degenerate zinc-finger fold. C2H2-type zinc fingers lie at residues 470-492 (YKCK…TRIH), 498-520 (YKCN…RRVH), 526-548 (YKCN…RRLH), 554-576 (YKCN…RRLH), 582-604 (YKCT…TRIH), 610-632 (YKCN…HRIH), 638-660 (YKCE…RRIH), 666-688 (YKCK…TGLH), and 694-716 (YKCN…QAVH).

Belongs to the krueppel C2H2-type zinc-finger protein family.

The protein resides in the nucleus. Its function is as follows. May be involved in transcriptional regulation. The sequence is that of Zinc finger protein 600 (ZNF600) from Homo sapiens (Human).